We begin with the raw amino-acid sequence, 448 residues long: MFTVVIVGRPNVGKSTLFNRMIKSDEKIKAITDKFPGVTRDINYGVAKWDDKEFIVVDTGGFFPEEKIEDIIQKQMLEQIEMAISDADLIIHLLDSKEGLLPDDIETARQLRQTGKDILWVVNKIDDPSKLSRIYDFYSIGTEELIPISGITGYGFDELIDKIIEKIPDTQPVNLEQQNLPKIAVVGRPNVGKSTIINALLGKKRMIVSPIPGTTRDTIDAICTYYGKKYLLIDTAGIKRLSYYKKEISQEIYVERLAYFKALRSIERADVAILVIDALEGIVNQDQKIAGIVAEQKKGLIILINKWDLIPANERDKKAKFFTDEIKHKLWFVDYAPYLTVSAIDKTRLTKIFPLIDQILEEYSKRVSTSELNRLFSEKLKDVIMSSHGKELKFYYITQVNVAPPTFVVFVNDQSAVKQHHIKFIEKLLRETFHFKFSPINIKIKQRK.

EngA-type G domains lie at 2–171 (FTVV…PDTQ) and 181–364 (PKIA…EEYS). GTP-binding positions include 8-15 (GRPNVGKS), 58-62 (DTGGF), 123-126 (NKID), 187-194 (GRPNVGKS), 234-238 (DTAGI), and 305-308 (NKWD). The 84-residue stretch at 365-448 (KRVSTSELNR…PINIKIKQRK (84 aa)) folds into the KH-like domain.

It belongs to the TRAFAC class TrmE-Era-EngA-EngB-Septin-like GTPase superfamily. EngA (Der) GTPase family. As to quaternary structure, associates with the 50S ribosomal subunit.

Its function is as follows. GTPase that plays an essential role in the late steps of ribosome biogenesis. The chain is GTPase Der from Thermodesulfovibrio yellowstonii (strain ATCC 51303 / DSM 11347 / YP87).